The chain runs to 394 residues: RHOMBOID-like protein 4 (394 aa).

Positions 1–51 are disordered; it reads MGEKDSETAPIWGKTRERERSNNNNIQPMDLESSSSVSGQQRSLTQSRSSY. Over residues 39–49 the composition is skewed to polar residues; that stretch reads GQQRSLTQSRS. The next 7 membrane-spanning stretches (helical) occupy residues 64-84, 147-167, 175-195, 201-221, 231-251, 254-274, and 300-320; these read WFPW…VITM, WLHG…FIGI, FIRI…LSAL, ISVG…SEIF, VVTI…GVLP, DNFA…VLLI, and ILWT…LISL. The active-site Nucleophile is Ser206. His258 (charge relay system) is an active-site residue.

It belongs to the peptidase S54 family.

The protein resides in the membrane. The catalysed reaction is Cleaves type-1 transmembrane domains using a catalytic dyad composed of serine and histidine that are contributed by different transmembrane domains.. In terms of biological role, probable rhomboid-type serine protease that catalyzes intramembrane proteolysis. The sequence is that of RHOMBOID-like protein 4 from Arabidopsis thaliana (Mouse-ear cress).